We begin with the raw amino-acid sequence, 112 residues long: Type III inner-rod protein PscI (112 aa).

The protein belongs to the YscI/HrpB family. Homomultimer (through its C-terminal region).

Its function is as follows. Component of the type III secretion (T3S) injectisome that translocates effector toxins into host cells, facilitating the establishment and dissemination of infection. Polymerizes into flexible and regularly twisted fibrils and plays an essential role in needle assembly. The polypeptide is Type III inner-rod protein PscI (pscI) (Pseudomonas aeruginosa (strain ATCC 15692 / DSM 22644 / CIP 104116 / JCM 14847 / LMG 12228 / 1C / PRS 101 / PAO1)).